Reading from the N-terminus, the 498-residue chain is Glycerol kinase (498 aa).

An ADP-binding site is contributed by Thr-12. ATP-binding residues include Thr-12, Thr-13, and Ser-14. Sn-glycerol 3-phosphate is bound at residue Thr-12. Arg-16 is an ADP binding site. Sn-glycerol 3-phosphate is bound by residues Arg-82, Glu-83, Tyr-135, and Asp-245. Residues Arg-82, Glu-83, Tyr-135, Asp-245, and Gln-246 each coordinate glycerol. The ADP site is built by Thr-267 and Gly-310. Residues Thr-267, Gly-310, Gln-314, and Gly-411 each contribute to the ATP site. The ADP site is built by Gly-411 and Asn-415.

It belongs to the FGGY kinase family. Homotetramer and homodimer (in equilibrium).

The catalysed reaction is glycerol + ATP = sn-glycerol 3-phosphate + ADP + H(+). Its pathway is polyol metabolism; glycerol degradation via glycerol kinase pathway; sn-glycerol 3-phosphate from glycerol: step 1/1. With respect to regulation, activated by phosphorylation and inhibited by fructose 1,6-bisphosphate (FBP). In terms of biological role, key enzyme in the regulation of glycerol uptake and metabolism. Catalyzes the phosphorylation of glycerol to yield sn-glycerol 3-phosphate. This Clostridium botulinum (strain Alaska E43 / Type E3) protein is Glycerol kinase.